The sequence spans 426 residues: Glutamate-1-semialdehyde 2,1-aminomutase (426 aa).

At Lys-265 the chain carries N6-(pyridoxal phosphate)lysine.

The protein belongs to the class-III pyridoxal-phosphate-dependent aminotransferase family. HemL subfamily. As to quaternary structure, homodimer. It depends on pyridoxal 5'-phosphate as a cofactor.

The protein resides in the cytoplasm. It carries out the reaction (S)-4-amino-5-oxopentanoate = 5-aminolevulinate. The protein operates within porphyrin-containing compound metabolism; protoporphyrin-IX biosynthesis; 5-aminolevulinate from L-glutamyl-tRNA(Glu): step 2/2. This Yersinia pestis bv. Antiqua (strain Antiqua) protein is Glutamate-1-semialdehyde 2,1-aminomutase.